The primary structure comprises 618 residues: COMPASS component cclA (618 aa).

Residues 1 to 91 (MSSIQPVGSS…KKAAVAPNSA (91 aa)) form a disordered region. 2 stretches are compositionally biased toward low complexity: residues 8-19 (GSSGPSSNINSP) and 37-49 (NARS…SNAS). Residues 57 to 69 (SKRNKRDSRKKRE) show a composition bias toward basic residues. The region spanning 157 to 368 (IADPGFPHIK…QSNVFSTKHL (212 aa)) is the B30.2/SPRY domain. The tract at residues 588-618 (TLSVGHEGSPNPATPSAPLENTVPTEDVEMS) is disordered.

It belongs to the cclA family. In terms of assembly, component of the COMPASS complex.

Its subcellular location is the nucleus. The protein resides in the chromosome. It localises to the telomere. Functionally, component of the COMPASS (Set1C) complex that specifically mono-, di- and trimethylates histone H3 to form H3K4me1/2/3, which subsequently plays a role in telomere length maintenance and transcription elongation regulation. Controls the production of several secondary metabolites, including gliotoxin, but does not contribute to pathogenicity. The polypeptide is COMPASS component cclA (Aspergillus fumigatus (strain ATCC MYA-4609 / CBS 101355 / FGSC A1100 / Af293) (Neosartorya fumigata)).